The primary structure comprises 240 residues: Uridylate kinase (240 aa).

13-16 (KFSG) provides a ligand contact to ATP. Glycine 55 provides a ligand contact to UMP. ATP contacts are provided by glycine 56 and arginine 60. UMP is bound by residues aspartate 76 and 137 to 144 (TGNPFFTT). Threonine 164, tyrosine 170, and aspartate 173 together coordinate ATP.

It belongs to the UMP kinase family. Homohexamer.

It localises to the cytoplasm. It catalyses the reaction UMP + ATP = UDP + ADP. It functions in the pathway pyrimidine metabolism; CTP biosynthesis via de novo pathway; UDP from UMP (UMPK route): step 1/1. With respect to regulation, inhibited by UTP. Catalyzes the reversible phosphorylation of UMP to UDP. In Helicobacter pylori (strain J99 / ATCC 700824) (Campylobacter pylori J99), this protein is Uridylate kinase.